Consider the following 400-residue polypeptide: Tryptophan 2,3-dioxygenase (400 aa).

Substrate is bound by residues F75–H79 and R146. H332 serves as a coordination point for heme. Position 346 (T346) interacts with substrate.

It belongs to the tryptophan 2,3-dioxygenase family. In terms of assembly, homotetramer. Dimer of dimers. Heme serves as cofactor.

The catalysed reaction is L-tryptophan + O2 = N-formyl-L-kynurenine. The protein operates within amino-acid degradation; L-tryptophan degradation via kynurenine pathway; L-kynurenine from L-tryptophan: step 1/2. Heme-dependent dioxygenase that catalyzes the oxidative cleavage of the L-tryptophan (L-Trp) pyrrole ring and converts L-tryptophan to N-formyl-L-kynurenine. Catalyzes the oxidative cleavage of the indole moiety. The protein is Tryptophan 2,3-dioxygenase of Dictyostelium discoideum (Social amoeba).